We begin with the raw amino-acid sequence, 345 residues long: 3-hydroxy-5-methyl-1-naphthoate 3-O-methyltransferase (345 aa).

Asp205 is a binding site for S-adenosyl-L-methionine. The active-site Proton acceptor is His252.

Belongs to the class I-like SAM-binding methyltransferase superfamily. Cation-independent O-methyltransferase family.

It carries out the reaction 3-hydroxy-5-methyl-1-naphthoate + S-adenosyl-L-methionine = 3-methoxy-5-methyl-1-naphthoate + S-adenosyl-L-homocysteine + H(+). It functions in the pathway antibiotic biosynthesis. With respect to regulation, inhibited by different divalent cations, such as Mg(2+), Mn(2+), Fe(2+), Cu(2+) and Zn(2+). O-methyltransferase that mediates the formation of 3-methoxy-5-methyl-1-naphthoate from 3-hydroxy-5-methyl-1-naphthoate in the biosynthesis of the antitumor antibiotic azinomycin B. In Streptomyces sahachiroi, this protein is 3-hydroxy-5-methyl-1-naphthoate 3-O-methyltransferase.